Here is a 634-residue protein sequence, read N- to C-terminus: Extracellular metalloproteinase mep (634 aa).

Residues Met-1–Ala-18 form the signal peptide. Residues His-19 to Glu-245 constitute a propeptide that is removed on maturation. N-linked (GlcNAc...) asparagine glycosylation is present at Asn-286. Residue His-429 coordinates Zn(2+). Glu-430 is a catalytic residue. His-433 lines the Zn(2+) pocket.

The protein belongs to the peptidase M36 family. The cofactor is Zn(2+).

The protein resides in the secreted. Functionally, secreted metalloproteinase that allows assimilation of proteinaceous substrates and probably acts as a virulence factor. This Aspergillus fumigatus (strain CBS 144.89 / FGSC A1163 / CEA10) (Neosartorya fumigata) protein is Extracellular metalloproteinase mep (mep).